A 351-amino-acid polypeptide reads, in one-letter code: Thiamine-phosphate synthase (351 aa).

The interval 1-128 (MKNPNIIQPE…SKIASEIRYE (128 aa)) is unknown. A thiamine-phosphate synthase region spans residues 129 to 351 (IYTLEIEILN…IIIKELSHEN (223 aa)). 4-amino-2-methyl-5-(diphosphooxymethyl)pyrimidine contacts are provided by residues 180–184 (QHRFK) and Asn212. Asn213 and Asp232 together coordinate Mg(2+). Ser251 serves as a coordination point for 4-amino-2-methyl-5-(diphosphooxymethyl)pyrimidine. 277–279 (TLT) contacts 2-[(2R,5Z)-2-carboxy-4-methylthiazol-5(2H)-ylidene]ethyl phosphate. Lys280 is a binding site for 4-amino-2-methyl-5-(diphosphooxymethyl)pyrimidine. 2-[(2R,5Z)-2-carboxy-4-methylthiazol-5(2H)-ylidene]ethyl phosphate-binding positions include Gly307 and 327 to 328 (VS).

It belongs to the thiamine-phosphate synthase family.

The enzyme catalyses 2-[(2R,5Z)-2-carboxy-4-methylthiazol-5(2H)-ylidene]ethyl phosphate + 4-amino-2-methyl-5-(diphosphooxymethyl)pyrimidine + 2 H(+) = thiamine phosphate + CO2 + diphosphate. The catalysed reaction is 2-(2-carboxy-4-methylthiazol-5-yl)ethyl phosphate + 4-amino-2-methyl-5-(diphosphooxymethyl)pyrimidine + 2 H(+) = thiamine phosphate + CO2 + diphosphate. It carries out the reaction 4-methyl-5-(2-phosphooxyethyl)-thiazole + 4-amino-2-methyl-5-(diphosphooxymethyl)pyrimidine + H(+) = thiamine phosphate + diphosphate. The protein operates within cofactor biosynthesis; thiamine diphosphate biosynthesis; thiamine phosphate from 4-amino-2-methyl-5-diphosphomethylpyrimidine and 4-methyl-5-(2-phosphoethyl)-thiazole: step 1/1. Its function is as follows. Condenses 4-methyl-5-(beta-hydroxyethyl)thiazole monophosphate (THZ-P) and 2-methyl-4-amino-5-hydroxymethyl pyrimidine pyrophosphate (HMP-PP) to form thiamine monophosphate (TMP). The polypeptide is Thiamine-phosphate synthase (Prochlorococcus marinus subsp. pastoris (strain CCMP1986 / NIES-2087 / MED4)).